Here is a 459-residue protein sequence, read N- to C-terminus: MTGGAMDPLPTAPGAAAAEAEVDEEADPPAADSPVPPVSEPRAPDAGQMQVPPGNPLLLSLTLQELLARDAVQVELVPEKKGLFLKHVEYEVSSQRFKSCVYRRYNDFVVFHETLLHKFPYRMVPALPPKRMLGADREFIEARRRALKRFINLVARHPPFSEDTILKLFLSFSGPDVQNKLKESAQCLGDEFMNCRLAARAKDFLPADIQTQFAMSRELIRNIYNSFHKLRDRAERMVSRAIDNAADLLIFGKELSALGSDTTPLPSWASLNSSTWGSLKQALKGLSVEFALLADKAAQQGKQEENDVVEKLNLFLDLLQSYKDLCERHEKGVLHKHQRALHKYSLMKRQMVSAAVQSREPESMEQLESRIVQQENVIQTMELRSHFSLYCLHQETQLVHVYLPLTSHILGAFVNSQIQGHKEMSKVWNDLQPKLRCLFVGPHGAPAPPRPPQDGLSAH.

The tract at residues 1-53 is disordered; the sequence is MTGGAMDPLPTAPGAAAAEAEVDEEADPPAADSPVPPVSEPRAPDAGQMQVPP. The region spanning 68-176 is the PX domain; that stretch reads ARDAVQVELV…KLFLSFSGPD (109 aa). Positions 104, 130, and 143 each coordinate a 1,2-diacyl-sn-glycero-3-phospho-(1D-myo-inositol-3-phosphate).

This sequence belongs to the sorting nexin family.

The protein localises to the early endosome membrane. May be involved in several stages of intracellular trafficking. May play a role in intracellular protein transport from early endosomes to the trans-Golgi network. This Bos taurus (Bovine) protein is Sorting nexin-8 (SNX8).